We begin with the raw amino-acid sequence, 209 residues long: Large ribosomal subunit protein uL3 (209 aa).

N5-methylglutamine is present on Gln150.

The protein belongs to the universal ribosomal protein uL3 family. In terms of assembly, part of the 50S ribosomal subunit. Forms a cluster with proteins L14 and L19. Post-translationally, methylated by PrmB.

Its function is as follows. One of the primary rRNA binding proteins, it binds directly near the 3'-end of the 23S rRNA, where it nucleates assembly of the 50S subunit. The sequence is that of Large ribosomal subunit protein uL3 from Cronobacter sakazakii (strain ATCC BAA-894) (Enterobacter sakazakii).